The sequence spans 616 residues: Heme A synthase-mitochondrial ferredoxin fusion protein (616 aa).

The N-terminal 45 residues, 1–45, are a transit peptide targeting the mitochondrion; sequence MNISRSSGLMRQFLLQPLRKGCDISCLGRSSWRMSRSFSGSSVLN. Residues 45–465 are heme a synthase cox15-like; it reads NEINLSRTKN…AALSLAQRLH (421 aa). Over 46–97 the chain is Mitochondrial matrix; sequence EINLSRTKNLFLNDCKFNKNSFEKFFARRLSNSVAPTPGGILQETEKIPSKK. Residues 98–118 traverse the membrane as a helical segment; that stretch reads VAFWLLGSSALVLAIVVVGGI. The Mitochondrial intermembrane segment spans residues 119 to 182; sequence TRLTESGLSI…NIFFWEWFHR (64 aa). A heme o-binding site is contributed by His181. The chain crosses the membrane as a helical span at residues 183–203; the sequence is VLGRGIGLTILLPSIYMIVTK. At 204 to 212 the chain is on the mitochondrial matrix side; sequence RASPWLSKR. A helical membrane pass occupies residues 213–233; sequence LIGLTGLVGLQGVIGWWMVKS. The Mitochondrial intermembrane portion of the chain corresponds to 234 to 254; it reads GLSEELFSDGSHPRVSHYRLA. A helical transmembrane segment spans residues 255 to 275; that stretch reads THLAAAVALYIGLVWTGHGIL. His256 provides a ligand contact to heme o. Residues 276 to 311 lie on the Mitochondrial matrix side of the membrane; that stretch reads QRHAFLKSMKSGSTSQLTSMVSSVQKMKGFRTSVNS. The helical transmembrane segment at 312–332 threads the bilayer; sequence FVGLVLITLLSGAFVAGLDAG. Residues 333-380 are Mitochondrial intermembrane-facing; the sequence is MIYCTFPEMGEGRLAPSKSELFDQRFCRKDDKSDLIWRNMIDNPSLVQ. Residues 381-401 form a helical membrane-spanning segment; sequence LEHRILAITTFVAACGLFIFS. Heme b is bound at residue His383. The Mitochondrial matrix portion of the chain corresponds to 402–417; the sequence is RAKRNILPKKIKTSIN. Residues 418 to 438 form a helical membrane-spanning segment; it reads VVTGVVTAQATLGIMTLIYVV. Pro439 is a topological domain (mitochondrial intermembrane). Residues 440 to 460 form a helical membrane-spanning segment; it reads VPLAALHQAGSLVTLTAALSL. Residue His446 participates in heme b binding. Over 461–616 the chain is Mitochondrial matrix; it reads AQRLHPEYAL…RNIRLERPKA (156 aa). The 2Fe-2S ferredoxin-type domain occupies 502 to 606; sequence FRPSFHSEIK…GIRVRIPAQT (105 aa). Positions 516-616 are mitochondrial ferredoxin yah1-like; that stretch reads GTGIKVFFVT…RNIRLERPKA (101 aa). Residues Cys541, Cys547, Cys550, and Cys587 each contribute to the [2Fe-2S] cluster site.

This sequence in the N-terminal section; belongs to the COX15/CtaA family. Type 2 subfamily. In the C-terminal section; belongs to the adrenodoxin/putidaredoxin family. Homodimer. It depends on heme b as a cofactor. Requires [2Fe-2S] cluster as cofactor. Post-translationally, the etp1 preprotein is cleaved into 2 chains after imort into mitochondria. The N-terminal chain containing a heme A synthase cox15-like domain etp1(cd) is a subunit of the membrane-embedded cytochrome c oxidase complex and functions in the respiratory chain. The C-terminal chain containing a ferredoxin yah1-like domain etp1(fd) is released and serves in the matrix as electron transfer protein.

It localises to the mitochondrion inner membrane. The protein resides in the mitochondrion matrix. It catalyses the reaction Fe(II)-heme o + 2 A + H2O = Fe(II)-heme a + 2 AH2. It functions in the pathway porphyrin-containing compound metabolism; heme A biosynthesis; heme A from heme O: step 1/1. Functionally, catalyzes the second reaction in the biosynthesis of heme A, a prosthetic group of mitochondrial cytochrome c oxidase (CcO). Heme A is synthesized from heme B by two sequential enzymatic reactions catalyzed by heme O synthase (HOS) and heme A synthase (HAS). HAS catalyzes the conversion of heme O to heme A by two successive hydroxylations of the methyl group at C8, in a reaction that involves matrix ferredoxin and ferredoxin reductase. The first hydroxylation forms heme I, the second hydroxylation results in an unstable dihydroxymethyl group, which spontaneously dehydrates, resulting in the formyl group of heme A. Iron-sulfur protein that transfers electrons in a wide variety of metabolic reactions. Involved in heme A biosynthesis and in iron-sulfur cluster assembly. Transfers electrons from adrenodoxin reductase arh1 to heme A synthase etp1(cd), a heme protein that catalyzes the conversion of heme O to heme A. Required for the de novo synthesis of Fe-S clusters on iron sulfur cluster assembly protein isu1. Interact in its reduced state with isu1 to productively deliver electrons for Fe-S cluster synthesis. Essential for coenzyme Q biosynthesis. May transfer the electrons required for the hydroxylation reaction performed by coq6. The protein is Heme A synthase-mitochondrial ferredoxin fusion protein of Schizosaccharomyces pombe (strain 972 / ATCC 24843) (Fission yeast).